The following is a 545-amino-acid chain: MAAKAIIYNEEARAKLKAGVDKLANAVKVTLGPKGREVILGKNWGTPVVTKDGVTVAKEIELKDKFENIGAQLVKEVASKTADVAGDGTTTATVLAQAIFHEGLRVAASGANVMEVKRGIDKAVKKIVEELKKLSKDVKERKEIEQVATISANNDPEIGKIIADAMEEVGKDGVITVEESKSAETTLEVVKGMQFDRGYLSPYFVTDPEKMECVLENPYILIYEKKITNVKELLPILEQVVRSGRPLLVIAEDVEGEALATLVVNHIKGVLKACAVKAPGFGQRRKDYLGDIAVLTGGQAITEDLGIKLESVTLDMLGQAEKVVVDKEHTTIIGGKGDPEQIKARIEQIKRQIQETTSDYDREKLQERLAKLSGGVAIIRVGAATEAELKEKKYRVEDAVHATKAAVEEGIVPGGGVALVRASEALEDLKGDNHDQQLGIDIIKKAVRTPLKQIAYNAGYDGSVVLEKVIELGKEKGVSWGFNAATGEYVDMYEAGIIDPTKVVRTAIENAASVAGTMLTAEALIADLPEEKKKDITPTDMPELD.

Residues 30-33 (TLGP), lysine 51, 87-91 (DGTTT), glycine 415, 483-485 (NAA), and aspartate 499 each bind ATP.

It belongs to the chaperonin (HSP60) family. Forms a cylinder of 14 subunits composed of two heptameric rings stacked back-to-back. Interacts with the co-chaperonin GroES.

The protein localises to the cytoplasm. It carries out the reaction ATP + H2O + a folded polypeptide = ADP + phosphate + an unfolded polypeptide.. In terms of biological role, together with its co-chaperonin GroES, plays an essential role in assisting protein folding. The GroEL-GroES system forms a nano-cage that allows encapsulation of the non-native substrate proteins and provides a physical environment optimized to promote and accelerate protein folding. The polypeptide is Chaperonin GroEL (Aquifex aeolicus (strain VF5)).